A 349-amino-acid chain; its full sequence is MPRNPKSFRLAARNIFLTYPQCDIPKDEALQMLQTLSWSVVKPTYIRVAREEHSDGFPHLHCLIQLSGKSNIKDARFFDITHPRRSANFHPNIQAAKDTNAVKNYITKDGDYCESGQYKVSGGTKANKDDVYHNAVNAGCVEEALAIIRAGDPKTFIVSYHNVRANIERLFTKAPEPWAPPFQLSSFTNVPDEMSSWADDYFGRSAAARAERPISIIVEGDSRTGKTMWARALGPHNYLSGHLDFNSKVFSNNAEYNVIDDIAPHYLKLKHWKELIGAQRDWQSNCKYGKPVQIKGGIPSIVLCNPGEGSSYISFLNKEENASLRAWTTKNAKFITLEAPLYQSTAQDC.

The CRESS-DNA virus Rep endonuclease domain occupies 9-118; sequence RLAARNIFLT…DGDYCESGQY (110 aa). Residues 16 to 19 carry the RCR-1 motif; sequence FLTY. The a divalent metal cation site is built by glutamate 51, histidine 59, and histidine 61. The short motif at 59-61 is the RCR-2 element; it reads HLH. Tyrosine 105 functions as the For DNA cleavage activity in the catalytic mechanism. An RCR-3 motif is present at residues 105–108; that stretch reads YITK. Aspartate 109 contributes to the a divalent metal cation binding site. The segment at 141-151 is binding to RBR1; that stretch reads VEEALAIIRAG. The oligomerization stretch occupies residues 154–174; that stretch reads KTFIVSYHNVRANIERLFTKA. 220 to 227 serves as a coordination point for ATP; that stretch reads GDSRTGKT.

This sequence belongs to the geminiviridae Rep protein family. Homooligomer. Interacts with the replication enhancer protein (REn). Interacts with host retinoblastoma-related protein 1 (RBR1), and may thereby induce the transcription of host replicative enzymes even if the cell is not dividing anymore. Interacts with host PCNA. Interacts with host SCE1 protein. The cofactor is Mg(2+). Requires Mn(2+) as cofactor.

The protein resides in the host nucleus. Functionally, essential for the replication of viral ssDNA. The closed circular ssDNA genome is first converted to a superhelical dsDNA. Rep binds a specific region at the genome origin of replication. It introduces an endonucleolytic nick within the conserved sequence 5'-TAATATTAC-3' in the intergenic region of the genome present in all geminiviruses, thereby initiating the rolling circle replication (RCR). Following cleavage, binds covalently to the 5'-phosphate of DNA as a tyrosyl ester. The cleavage gives rise to a free 3'-OH that serves as a primer for the cellular DNA polymerase. The polymerase synthesizes the (+) strand DNA by rolling circle mechanism. After one round of replication, a Rep-catalyzed nucleotidyl transfer reaction releases a circular single-stranded virus genome, thereby terminating the replication. Displays origin-specific DNA cleavage, nucleotidyl transferase, ATPase and helicase activities. This chain is Replication-associated protein, found in Cabbage leaf curl virus (isolate Jamaica) (CaLCuV).